The sequence spans 622 residues: Glucose 1,6-bisphosphate synthase (622 aa).

Residues R73 and S175 each coordinate alpha-D-glucose 1,6-bisphosphate. The active-site Phosphoserine intermediate is the S175. Residues S175, D332, and D334 each coordinate Mg(2+). S175 is subject to Phosphoserine. Positions 336, 337, 434, 436, and 448 each coordinate alpha-D-glucose 1,6-bisphosphate.

The protein belongs to the phosphohexose mutase family.

The protein localises to the cytoplasm. It localises to the cytosol. It catalyses the reaction (2R)-3-phospho-glyceroyl phosphate + alpha-D-glucose 1-phosphate = alpha-D-glucose 1,6-bisphosphate + (2R)-3-phosphoglycerate + H(+). The catalysed reaction is alpha-D-glucose 6-phosphate + (2R)-3-phospho-glyceroyl phosphate = alpha-D-glucose 1,6-bisphosphate + (2R)-3-phosphoglycerate + H(+). It carries out the reaction (2R)-3-phospho-glyceroyl phosphate + alpha-D-ribose 1-phosphate = alpha-D-ribose 1,5-bisphosphate + (2R)-3-phosphoglycerate + H(+). The enzyme catalyses 2-deoxy-alpha-D-ribose 1-phosphate + (2R)-3-phospho-glyceroyl phosphate = 2-deoxy-alpha-D-ribose 1,5-bisphosphate + (2R)-3-phosphoglycerate + H(+). It catalyses the reaction (2R)-3-phospho-glyceroyl phosphate + alpha-D-mannose 1-phosphate = alpha-D-mannose 1,6-bisphosphate + (2R)-3-phosphoglycerate + H(+). Glucose 1,6-bisphosphate synthase using 1,3-bisphosphoglycerate as a phosphate donor and a series of 1-phosphate sugars, including glucose 1-phosphate, mannose 1-phosphate, ribose 1-phosphate and deoxyribose 1-phosphate, as acceptors. In vitro, also exhibits very low phosphopentomutase and phosphoglucomutase activity which are most probably not physiologically relevant. The sequence is that of Glucose 1,6-bisphosphate synthase from Homo sapiens (Human).